The sequence spans 68 residues: U4-agatoxin-Ao1a (68 aa).

The N-terminal stretch at 1 to 25 (MKKSTVIVLSLAAFVLLSVMQFSAA) is a signal peptide. Residues 26–36 (EDIKMEVEEQR) constitute a propeptide that is removed on maturation. 4 disulfide bridges follow: Cys39/Cys52, Cys46/Cys57, Cys51/Cys66, and Cys59/Cys64.

The protein belongs to the neurotoxin 33 family. In terms of tissue distribution, expressed by the venom gland.

The protein localises to the secreted. The sequence is that of U4-agatoxin-Ao1a from Agelena orientalis (Funnel-web spider).